We begin with the raw amino-acid sequence, 205 residues long: Protein phosphatase inhibitor 2 (205 aa).

The tract at residues 1-44 is disordered; it reads MAASTASHRPIKGILKNKTSTTSSVVASAEQPRRTVEEELSKKS. Ala2 bears the N-acetylalanine mark. Residues 12–17 form a required for binding PPP1CC region; the sequence is KGILKN. Low complexity predominate over residues 19–29; it reads TSTTSSVVASA. Residues 31-44 show a composition bias toward basic and acidic residues; sequence QPRRTVEEELSKKS. The required for binding PPP1CC stretch occupies residues 43 to 55; sequence KSQKWDEMNILAT. Ser44 is modified (phosphoserine; by ATM). Thr73 is subject to Phosphothreonine; by GSK3. Residues Ser87 and Ser89 each carry the phosphoserine modification. Thr96 and Thr116 each carry phosphothreonine. The interval 104–142 is disordered; that stretch reads LAAAEGSEPKFRTREQESSGEEDNDLSPEEREKKRQFEM. Residues 110 to 120 are compositionally biased toward basic and acidic residues; the sequence is SEPKFRTREQE. 3 positions are modified to phosphoserine: Ser121, Ser122, and Ser130. Residues 121 to 130 show a composition bias toward acidic residues; sequence SSGEEDNDLS. Basic and acidic residues predominate over residues 131–142; the sequence is PEEREKKRQFEM. A required for binding PPP1CC catalytic center, displacing metal ions and inhibition of PPP1CC catalytic activity region spans residues 147-150; it reads HYNE. Positions 163–205 are disordered; it reads KDLHDDDEDEEMSETADADSMNIEESNQGSTAGDHLQHKSQSS. The segment covering 167 to 179 has biased composition (acidic residues); that stretch reads DDDEDEEMSETAD.

It belongs to the protein phosphatase inhibitor 2 family. As to quaternary structure, heterodimer with PP1. Phosphorylation on Ser-44 by ATM activates PP1 by dissociating the PP1-PPP1R2 complex. Phosphorylation on Thr-73 by GSK3 activates PP1 by dissociating the PP1-PPP1R2 complex. As to expression, central nervous system.

Functionally, inhibitor of protein-phosphatase 1. This is Protein phosphatase inhibitor 2 (Ppp1r2) from Rattus norvegicus (Rat).